Here is a 398-residue protein sequence, read N- to C-terminus: Calcium-binding and coiled-coil domain-containing protein 2 (398 aa).

The CLIR signature appears at 133–136; it reads ILVV. Positions 137–301 form a coiled coil; it reads TTQGEVEEIE…RENSRLLSYM (165 aa). An LIR-like motif is present at residues 203 to 206; that stretch reads DYWE. Residues 314–341 form a disordered region; the sequence is TSDEGGAGQNPGLVYGNPYSGIQESSSP. The tract at residues 323–333 is interaction with LGALS8; that stretch reads NPGLVYGNPYS. The interaction with MYO6 stretch occupies residues 347-398; the sequence is KKCPICKADDICDHTLEQQQMQALCLNCPICDKIFPATEKQIFEDHVFCHSL. The UBZ1-type zinc-finger motif lies at 371–396; it reads CLNCPICDKIFPATEKQIFEDHVFCH. C374, C377, H392, and H396 together coordinate Zn(2+). Phosphoserine is present on S397.

Belongs to the CALCOCO family. As to quaternary structure, dimer. Part of a complex consisting of CALCOCO2, TAX1BP1 and MYO6. Interacts with MYO6. Interacts with GEMIN4. Interacts with ATG8 family members MAP1LC3A, MAP1LC3B, GABARAP, GABARAPL1 and GABARAPL2. Interacts with ATG8 family member MAP1LC3C. Interacts with LGALS8. Interacts with TOM1; the interaction is indirect and is mediated by MYO6, which acts as a bridge between TOM1 and CALCOCO2. Interacts with AZI2.

It is found in the cytoplasm. Its subcellular location is the perinuclear region. It localises to the cytoskeleton. The protein resides in the cytoplasmic vesicle. The protein localises to the autophagosome membrane. Functionally, xenophagy-specific receptor required for autophagy-mediated intracellular bacteria degradation. Acts as an effector protein of galectin-sensed membrane damage that restricts the proliferation of infecting pathogens upon entry into the cytosol by targeting LGALS8-associated bacteria for autophagy. Initially orchestrates bacteria targeting to autophagosomes and subsequently ensures pathogen degradation by regulating pathogen-containing autophagosome maturation. Bacteria targeting to autophagosomes relies on its interaction with MAP1LC3A, MAP1LC3B and/or GABARAPL2, whereas regulation of pathogen-containing autophagosome maturation requires the interaction with MAP3LC3C. May play a role in ruffle formation and actin cytoskeleton organization and seems to negatively regulate constitutive secretion. The chain is Calcium-binding and coiled-coil domain-containing protein 2 from Macaca fascicularis (Crab-eating macaque).